The following is a 190-amino-acid chain: Negative regulator YfiR (190 aa).

GMP is bound at residue R60. Cystine bridges form between C71–C110 and C145–C152. Residues R175 and H177 each contribute to the GMP site.

Homodimer. Interacts with TpbB/YfiN. Interacts with YfiB. The YfiB-YfiR complex is a 2:2 heterotetramer. In terms of processing, cys-71 and Cys-110 form a disulfide bond in the oxidized form but maintain their free form in the non-oxidized YfiR structure. The Cys-145-Cys-152 disulfide bond is well formed in both structures. The Cys145-Cys152 disulfide bond, but not Cys-71-Cys-110, plays an important role in maintaining the correct folding of the protein.

The protein localises to the periplasm. With respect to regulation, tpbB/YfiN repression is released through an YfiB-dependent sequestration of YfiR to the outer membrane. Binds vitamin B6 (VB6) or L-Trp at the periphery of the dimer, and both VB6 and L-Trp are able to reduce biofilm formation induced by YfiB L43P mutant. However, VB6 or L-Trp alone may have little effects in interrupting the YfiB-YfiR interaction. GMP enhances the binding affinity between YfiB and YfiR. Its function is as follows. Negatively regulates the activity of the diguanylate cyclase TpbB/YfiN, leading to decreased c-di-GMP production. Inhibits TpbB/YfiN allosterically, through a hydrophobic interaction between the C-terminus of YfiR and a conserved region of the periplasmic PAS domain of TpbB/YfiN. Under reducing conditions, may also act as an YfiB-independent sensing device that is able to activate TpbB/YfiN in response to the redox status of the periplasm. Functionally, part of the YfiB-TpbB-YfiR (or yfiBNR) system, encoding a tripartite signaling module that modulates intracellular c-di-GMP levels. The system is a key regulator of the small colony variant (SCV) phenotype, and plays an important role in biofilm formation and in vivo persistence. The c-di-GMP produced by TpbB/YfiN stimulates the production of the Pel and Psl exopolysaccharides, which promotes surface attachment, generates an SCV phenotype and confers resistance against phagocytosis. The protein is Negative regulator YfiR of Pseudomonas aeruginosa (strain ATCC 15692 / DSM 22644 / CIP 104116 / JCM 14847 / LMG 12228 / 1C / PRS 101 / PAO1).